Reading from the N-terminus, the 536-residue chain is Apolipoprotein N-acyltransferase (536 aa).

The next 6 helical transmembrane spans lie at Pro-34–Ala-54, Ala-64–Ile-84, Tyr-89–Ala-109, Gly-129–Trp-149, Tyr-172–Trp-192, and His-199–Gln-219. Residues Leu-244–Gly-487 enclose the CN hydrolase domain. The active-site Proton acceptor is the Glu-283. The active site involves Lys-345. Residue Cys-395 is the Nucleophile of the active site. The chain crosses the membrane as a helical span at residues Trp-503–Trp-523.

Belongs to the CN hydrolase family. Apolipoprotein N-acyltransferase subfamily.

Its subcellular location is the cell inner membrane. It catalyses the reaction N-terminal S-1,2-diacyl-sn-glyceryl-L-cysteinyl-[lipoprotein] + a glycerophospholipid = N-acyl-S-1,2-diacyl-sn-glyceryl-L-cysteinyl-[lipoprotein] + a 2-acyl-sn-glycero-3-phospholipid + H(+). The protein operates within protein modification; lipoprotein biosynthesis (N-acyl transfer). Catalyzes the phospholipid dependent N-acylation of the N-terminal cysteine of apolipoprotein, the last step in lipoprotein maturation. This Verminephrobacter eiseniae (strain EF01-2) protein is Apolipoprotein N-acyltransferase.